The following is a 456-amino-acid chain: Endoglucanase A (456 aa).

A signal peptide spans 1-30; the sequence is MSRIRRFLATALAAATAGVGAIVTAIASAG. Residues 31–322 are catalytic; sequence PAHAYDSPFY…RAYELAMNAA (292 aa). The active site involves aspartate 113. Disulfide bonds link cysteine 114-cysteine 159 and cysteine 267-cysteine 302. The active-site Proton donor is aspartate 151. Positions 255 to 280 are disordered; it reads SRNGNGPLGSEWCDPPGRATGTWSTT. Aspartate 300 functions as the Nucleophile in the catalytic mechanism. The interval 321–358 is disordered; that stretch reads AAPPTYSPSPTPSTPSPSPSQSDPGSPSPSPSQPPAGR. The linker ('hinge') (Pro-Ser box) stretch occupies residues 323–355; sequence PPTYSPSPTPSTPSPSPSQSDPGSPSPSPSQPP. A compositionally biased stretch (pro residues) spans 325–338; the sequence is TYSPSPTPSTPSPS. Residues 353–456 enclose the CBM2 domain; it reads QPPAGRACEA…LSSSITCSAS (104 aa). A disulfide bridge links cysteine 360 with cysteine 453.

Belongs to the glycosyl hydrolase 6 (cellulase B) family.

It carries out the reaction Endohydrolysis of (1-&gt;4)-beta-D-glucosidic linkages in cellulose, lichenin and cereal beta-D-glucans.. The sequence is that of Endoglucanase A (celA) from Thermobispora bispora (Microbispora bispora).